The primary structure comprises 296 residues: Cadherin-4 (296 aa).

3 consecutive Cadherin domains span residues 1–101 (NVPE…RPEF), 102–216 (INQV…PPEF), and 217–296 (TTST…MLTI). Over 1–296 (NVPENSRGPF…ELNRAFMLTI (296 aa)) the chain is Extracellular. 2 N-linked (GlcNAc...) asparagine glycosylation sites follow: Asn-107 and Asn-236.

It is found in the cell membrane. Its function is as follows. Cadherins are calcium-dependent cell adhesion proteins. They preferentially interact with themselves in a homophilic manner in connecting cells; cadherins may thus contribute to the sorting of heterogeneous cell types. May play an important role in retinal development. The polypeptide is Cadherin-4 (Cdh4) (Rattus norvegicus (Rat)).